Here is a 494-residue protein sequence, read N- to C-terminus: Argininosuccinate synthase, chloroplastic (494 aa).

The transit peptide at M1 to R73 directs the protein to the chloroplast. A74 is modified (N-acetylalanine). ATP contacts are provided by residues A102–S110 and A129. L-citrulline is bound by residues Y181 and S186. G211 is an ATP binding site. L-aspartate-binding residues include T213, N217, and D218. N217 is a binding site for L-citrulline. L-citrulline contacts are provided by R221, S270, S279, E355, and Y367.

It belongs to the argininosuccinate synthase family. Type 1 subfamily. As to quaternary structure, homotetramer.

The protein resides in the plastid. The protein localises to the chloroplast. The enzyme catalyses L-citrulline + L-aspartate + ATP = 2-(N(omega)-L-arginino)succinate + AMP + diphosphate + H(+). Its pathway is amino-acid biosynthesis; L-arginine biosynthesis; L-arginine from L-ornithine and carbamoyl phosphate: step 2/3. The polypeptide is Argininosuccinate synthase, chloroplastic (Arabidopsis thaliana (Mouse-ear cress)).